Consider the following 75-residue polypeptide: Defensin-like protein 59 (75 aa).

The signal sequence occupies residues 1–19; the sequence is MNITKSYVVIFFLVMLTNS. Disulfide bonds link Cys-39/Cys-73, Cys-43/Cys-66, Cys-52/Cys-71, and Cys-56/Cys-72.

This sequence belongs to the DEFL family.

The protein resides in the secreted. The chain is Defensin-like protein 59 from Arabidopsis thaliana (Mouse-ear cress).